The following is a 20-amino-acid chain: Alpha-basrubrin (20 aa).

A compositionally biased stretch (basic and acidic residues) spans 1 to 13 (GADFQECMKEHSQ). The disordered stretch occupies residues 1–20 (GADFQECMKEHSQKQHQHQG).

In terms of biological role, possesses antifungal activity against B.cinerea, M.arachidicola and F.oxysporum but not C.comatus and R.solani. Inhibits HIV-1 reverse transcriptase and cell-free translation. This chain is Alpha-basrubrin, found in Basella alba (Malabar spinach).